Reading from the N-terminus, the 431-residue chain is Forkhead box protein P3 (431 aa).

The disordered stretch occupies residues 1-68; it reads MPNPRPGKPS…SSLNPMPPSQ (68 aa). The segment covering 10-25 has biased composition (low complexity); sequence SAPSLALGPSPGASPS. The residue at position 19 (S19) is a Phosphoserine; by CDK2. K31 bears the N6-acetyllysine mark. A Nuclear export signal motif is present at residues 68–76; sequence QLQLPTLPL. The short motif at 92 to 96 is the LXXLL motif element; it reads LQALL. Positions 106–190 are essential for transcriptional repressor activity and for interaction with KAT5 and HDAC7; the sequence is LSTVDAHART…STLSAVPQSS (85 aa). The segment at 106–198 is interaction with ZFP90; sequence LSTVDAHART…SSYPLLANGV (93 aa). The tract at residues 149–199 is interaction with IKZF4; it reads LPPGINVASLEWVSREPALLCTFPNPSAPRKDSTLSAVPQSSYPLLANGVC. A C2H2-type zinc finger spans residues 197-222; that stretch reads GVCKWPGCEKVFEEPEDFLKHCQADH. Residues 239–248 carry the Nuclear export signal motif; sequence VQSLEQQLVL. Residues 239–260 form a leucine-zipper region; sequence VQSLEQQLVLEKEKLSAMQAHL. Glycyl lysine isopeptide (Lys-Gly) (interchain with G-Cter in ubiquitin) cross-links involve residues K250 and K252. K263 and K268 each carry N6-acetyllysine; alternate. Residues K263 and K268 each participate in a glycyl lysine isopeptide (Lys-Gly) (interchain with G-Cter in ubiquitin); alternate cross-link. An interaction with RUNX1 region spans residues 278-336; sequence GSCCIVAAGSQGPVVPAWSGPREAPDSLFAVRRHLWGSHGNSTFPEFLHNMDYFKFHNM. Positions 337-423 form a DNA-binding region, fork-head; sequence RPPFTYATLI…RKKRSQRPSR (87 aa). A Glycyl lysine isopeptide (Lys-Gly) (interchain with G-Cter in ubiquitin) cross-link involves residue K393. Positions 414-417 match the Nuclear localization signal motif; it reads RKKR. Residue S418 is modified to Phosphoserine. Residues 418 to 431 constitute a propeptide that is removed on maturation; the sequence is SQRPSRCSNPTPGP.

Homodimer. Dimerization is essential for its transcriptional regulator activity. Interacts with IKZF3. Isoform 1 (via LXXLL motif), but not isoform 2, interacts with isoform 4 of RORA (via AF-2 motif). Interacts with STUB1, HSPA8 and HSPA1A/B. Interacts with PPP1CA, PPP1CB and PPP1CG. Interacts with KAT5 and HDAC7. Interacts with HDAC9 in the absence of T-cell stimulation. Interacts with USP7. Interacts with isoform 2 of ZFP90 and can form a complex with TRIM28 in the presence of isoform 2 of ZFP90. Interacts with RUNX1. Interacts with RORC. Interacts with RELA and NFATC2. Interacts with RUNX2, RUNX3 and IKZF4. Polyubiquitinated, leading to its proteasomal degradation in regulatory T-cells (Treg) which is mediated by STUB1 in a HSPA1A/B-dependent manner. Deubiquitinated by USP7 and USP44; leading to increase in protein stability. Post-translationally, phosphorylation at Ser-418 regulates its transcriptional repressor activity and consequently, regulatory T-cells (Treg) suppressive function. Dephosphorylated at Ser-418 by protein phosphatase 1 (PP1) in Treg cells derived from patients with rheumatoid arthritis. Phosphorylation by CDK2 negatively regulates its transcriptional activity and protein stability. In terms of processing, acetylation on lysine residues stabilizes FOXP3 and promotes differentiation of T-cells into induced regulatory T-cells (iTregs) associated with suppressive functions. Acetylation is mediated by a coordinated action of KAT5 and EP300/p300 acetyltransferases: EP300/p300 is required to enhance KAT5 autoacetylation, promoting acetylation of FOXP3 by KAT5. Deacetylated by SIRT1. Undergoes proteolytic cleavage in activated regulatory T-cells (Treg), and can be cleaved at either the N- or C-terminal site, or at both sites.

The protein resides in the nucleus. The protein localises to the cytoplasm. Its function is as follows. Transcriptional regulator which is crucial for the development and inhibitory function of regulatory T-cells (Treg). Plays an essential role in maintaining homeostasis of the immune system by allowing the acquisition of full suppressive function and stability of the Treg lineage, and by directly modulating the expansion and function of conventional T-cells. Can act either as a transcriptional repressor or a transcriptional activator depending on its interactions with other transcription factors, histone acetylases and deacetylases. The suppressive activity of Treg involves the coordinate activation of many genes, including CTLA4 and TNFRSF18 by FOXP3 along with repression of genes encoding cytokines such as interleukin-2 (IL2) and interferon-gamma (IFNG). Inhibits cytokine production and T-cell effector function by repressing the activity of two key transcription factors, RELA and NFATC2. Mediates transcriptional repression of IL2 via its association with histone acetylase KAT5 and histone deacetylase HDAC7. Can activate the expression of TNFRSF18, IL2RA and CTLA4 and repress the expression of IL2 and IFNG via its association with transcription factor RUNX1. Inhibits the differentiation of IL17 producing helper T-cells (Th17) by antagonizing RORC function, leading to down-regulation of IL17 expression, favoring Treg development. Inhibits the transcriptional activator activity of RORA. Can repress the expression of IL2 and IFNG via its association with transcription factor IKZF4. The polypeptide is Forkhead box protein P3 (FOXP3) (Homo sapiens (Human)).